Consider the following 386-residue polypeptide: Cysteine protease Amb a 11.0101 (386 aa).

The signal sequence occupies residues 1–22 (MEINKLVCFSFSLVLILGLVES). The tract at residues 6-20 (LVCFSFSLVLILGLV) is T-cell epitope. MHC class II peptide able to activate CD(4+) T cells of the ragweed pollen-allergic patients indicated by significantly increased IL-2 production compared to non-allergic individuals. Not recognized by IgE of the patients allergic to ragweed pollen. Positions 23-108 (FHYHERELES…SKISHFQALR (86 aa)) are cleaved as a propeptide — activation peptide. Asn127 carries N-linked (GlcNAc...) (complex) asparagine glycosylation. Intrachain disulfides connect Cys152–Cys193, Cys186–Cys226, and Cys283–Cys334. The active site involves Cys155. The tract at residues 173–186 (GKLVKFSEQQLVDC) is B-cell epitope. Binds to IgE of the patients allergic to ragweed pollen. Catalysis depends on residues His289 and Asn310. The interval 340 to 377 (SSFPIMNDPNPPKDDPNGPKDDPDAPKDPKFKTTQRLQ) is disordered. The segment covering 350–370 (PPKDDPNGPKDDPDAPKDPKF) has biased composition (basic and acidic residues). A propeptide spans 371–386 (KTTQRLQGIRTKLLEL) (removed in mature form).

Belongs to the peptidase C1 family. In terms of assembly, homodimer. Post-translationally, autocatalytic proteolytic cleavage of N-terminal activation peptide. N-glycosylated. Glycosylation is not required for binding to IgE. Expressed in pollen (at protein and mRNA level).

Activated by L-cysteine. Inhibited by cysteine protease inhibitor E64 (L-trans-epoxysuccinyl-leucylamide-(4-guanido)-butane). Inhibited by cysteine/serine protease inhibitor leupeptin. Not inhibited by serine protease inhibitors 4-(2-aminoethyl)benzenesulfonyl fluoride hydrochloride (AEBSF) and phenylmethanesulfonyl fluoride (PMSF), metallo protease inhibitor bestatin or aspartic protease inhibitor pepstatin A. In terms of biological role, cysteine protease. Hydrolyzes casein and synthetic peptide Boc-Val-Leu-Lys-7-amino-4-methylcoumarin (Boc-VLK-AMC) in vitro. The polypeptide is Cysteine protease Amb a 11.0101 (Ambrosia artemisiifolia (Common ragweed)).